Here is a 104-residue protein sequence, read N- to C-terminus: MARKIRRDDEIIVLAGKDKGKLGKVLKVLPAADRLIVEGVNLVKKHQKPNPQLGVTGGVIEKEASIHVSNVAIVNPKTGKADRIGFRFEDDKKVRFFKSDGELV.

It belongs to the universal ribosomal protein uL24 family. As to quaternary structure, part of the 50S ribosomal subunit.

One of two assembly initiator proteins, it binds directly to the 5'-end of the 23S rRNA, where it nucleates assembly of the 50S subunit. Functionally, one of the proteins that surrounds the polypeptide exit tunnel on the outside of the subunit. The protein is Large ribosomal subunit protein uL24 of Pseudoalteromonas atlantica (strain T6c / ATCC BAA-1087).